A 195-amino-acid polypeptide reads, in one-letter code: Translation machinery-associated protein 22 (195 aa).

Residues 94 to 165 (VLIKRIERNR…EAKEYIEKLL (72 aa)) form the SUI1 domain. The interval 176 to 195 (EQVDEKKKKKATAPGATPAA) is disordered.

It belongs to the DENR family. Interacts with the 40S ribosomal subunit.

The protein localises to the cytoplasm. The protein is Translation machinery-associated protein 22 (TMA22) of Scheffersomyces stipitis (strain ATCC 58785 / CBS 6054 / NBRC 10063 / NRRL Y-11545) (Yeast).